We begin with the raw amino-acid sequence, 191 residues long: 3-isopropylmalate dehydratase small subunit (191 aa).

Belongs to the LeuD family. LeuD type 1 subfamily. As to quaternary structure, heterodimer of LeuC and LeuD.

It catalyses the reaction (2R,3S)-3-isopropylmalate = (2S)-2-isopropylmalate. Its pathway is amino-acid biosynthesis; L-leucine biosynthesis; L-leucine from 3-methyl-2-oxobutanoate: step 2/4. Catalyzes the isomerization between 2-isopropylmalate and 3-isopropylmalate, via the formation of 2-isopropylmaleate. This is 3-isopropylmalate dehydratase small subunit from Staphylococcus saprophyticus subsp. saprophyticus (strain ATCC 15305 / DSM 20229 / NCIMB 8711 / NCTC 7292 / S-41).